A 421-amino-acid polypeptide reads, in one-letter code: Cyclin-A2 (421 aa).

The residue at position 1 (Met-1) is an N-acetylmethionine. Residues 1-60 (MPGSSRQSGREAGSALLSLQQEDQENVNPEKAAPDQRARAALKTGNARGNAPQQRLKARR) form a disordered region. At Ser-5 the chain carries Phosphoserine.

Belongs to the cyclin family. Cyclin AB subfamily. In terms of assembly, interacts with the CDK1 and CDK2 protein kinases to form serine/threonine kinase holoenzyme complexes. Interacts with CDK1 (hyperphosphorylated form in G1 and underphosphorylated forms in S and G2). Interacts with CDK2; the interaction increases from G1 to G2. Interacts (associated with CDK2 but not with CDK1) with SCAPER; regulates the activity of CCNA2/CDK2 by transiently maintaining CCNA2 in the cytoplasm. Forms a ternary complex with CDK2 and CDKN1B; CDKN1B inhibits the kinase activity of CDK2 through conformational rearrangements. Interacts with INCA1. Post-translationally, polyubiquitinated via 'Lys-11'-linked ubiquitin by the anaphase-promoting complex (APC/C), leading to its degradation by the proteasome. Deubiquitinated and stabilized by USP37 enables entry into S phase. Ubiquitinated during the G1 phase by the SCF(FBXO31) complex, leading to its proteasomal degradation.

The protein localises to the nucleus. It localises to the cytoplasm. Its function is as follows. Cyclin which controls both the G1/S and the G2/M transition phases of the cell cycle. Functions through the formation of specific serine/threonine kinase holoenzyme complexes with the cyclin-dependent protein kinases CDK1 and CDK2. The cyclin subunit confers the substrate specificity of these complexes and differentially interacts with and activates CDK1 and CDK2 throughout the cell cycle. This chain is Cyclin-A2, found in Mesocricetus auratus (Golden hamster).